The following is a 347-amino-acid chain: Spermidine/putrescine import ATP-binding protein PotA (347 aa).

Positions 6 to 238 (LEIKNLSHYY…PKTKFVADFI (233 aa)) constitute an ABC transporter domain. Residue 40-47 (GPSGCGKT) participates in ATP binding.

This sequence belongs to the ABC transporter superfamily. Spermidine/putrescine importer (TC 3.A.1.11.1) family. As to quaternary structure, the complex is composed of two ATP-binding proteins (PotA), two transmembrane proteins (PotB and PotC) and a solute-binding protein (PotD).

Its subcellular location is the cell inner membrane. The catalysed reaction is ATP + H2O + polyamine-[polyamine-binding protein]Side 1 = ADP + phosphate + polyamineSide 2 + [polyamine-binding protein]Side 1.. Its function is as follows. Part of the ABC transporter complex PotABCD involved in spermidine/putrescine import. Responsible for energy coupling to the transport system. This Borreliella afzelii (strain PKo) (Borrelia afzelii) protein is Spermidine/putrescine import ATP-binding protein PotA.